Reading from the N-terminus, the 95-residue chain is Toxin Tbo-IT2 (95 aa).

Residues 1–23 (MTMKTLCLSLIVIGVLILVAVKA) form the signal peptide. Positions 24 to 53 (EDYVNINSLEEAPEENVNINNLEETPEESR) are excised as a propeptide. Intrachain disulfides connect Cys54–Cys68, Cys61–Cys73, Cys67–Cys84, Cys70–Cys92, and Cys75–Cys82. Residue Cys92 is modified to Cysteine amide.

Belongs to the neurotoxin 02 (plectoxin) family. 02 (plectoxin) subfamily. In terms of tissue distribution, expressed by the venom gland.

The protein resides in the secreted. Functionally, this recombinant (non-amidated) toxin shows insecticidal activity on larvae of the housefly Musca domestica and has no activity on a panel of expressed neuronal receptors and ion channels. The polypeptide is Toxin Tbo-IT2 (Tibellus oblongus (Oblong running crab spider)).